The chain runs to 181 residues: Large ribosomal subunit protein uL5 (181 aa).

This sequence belongs to the universal ribosomal protein uL5 family. As to quaternary structure, part of the 50S ribosomal subunit; part of the 5S rRNA/L5/L18/L25 subcomplex. Contacts the 5S rRNA and the P site tRNA. Forms a bridge to the 30S subunit in the 70S ribosome.

Its function is as follows. This is one of the proteins that bind and probably mediate the attachment of the 5S RNA into the large ribosomal subunit, where it forms part of the central protuberance. In the 70S ribosome it contacts protein S13 of the 30S subunit (bridge B1b), connecting the 2 subunits; this bridge is implicated in subunit movement. Contacts the P site tRNA; the 5S rRNA and some of its associated proteins might help stabilize positioning of ribosome-bound tRNAs. The chain is Large ribosomal subunit protein uL5 from Clostridium kluyveri (strain NBRC 12016).